We begin with the raw amino-acid sequence, 578 residues long: Glucans biosynthesis protein G (578 aa).

The signal sequence occupies residues Met-1 to Ala-37. Residues Val-511 to Glu-578 are disordered. The segment covering Lys-517–Gln-543 has biased composition (basic and acidic residues). Positions Pro-544–Ser-554 are enriched in low complexity.

Belongs to the OpgD/OpgG family.

The protein localises to the periplasm. It functions in the pathway glycan metabolism; osmoregulated periplasmic glucan (OPG) biosynthesis. Functionally, involved in the biosynthesis of osmoregulated periplasmic glucans (OPGs). This chain is Glucans biosynthesis protein G, found in Pseudomonas entomophila (strain L48).